We begin with the raw amino-acid sequence, 983 residues long: MSFALEETLESDWVAVRPHVFDEREKHKFVFIVAWNEIEGKFAITCHNRTAQRQRSGSREQAGTPASDGSRGPGSPAARGRSEAAASATAALRSPGPRKSQAWAEGGSPRSARSLKGDPPRGPAGRGPESPLRSPARAKASPLRRSAESRDAIASATPVPPAPPVPPVSSVRVVSASGAVSEEIEVLEMVREDEAPQPLPDSEQPPSAAELESSAEECSWAGLFSFQDLRAVHQQLCSVNSQLEPCLPVFPEEPSGMWTVLFGGAPEMTEQEIDALCYQLQVYLGHGLDTCGWKILSQVLFTETDDPEEYYESLSELRQKGYEEVLQRARRRIQELLDKHKTIESMVELLDLYQMEDEAYSSLAEATTELYQYLLQPFRDMRELAMLRRQQIKISMENDYLGPRRIESLQKEDADWQRKAHMAVLSIQDLTVKYFEITAKAQKAVYDRMRADQKKFGKASWAAAAERMEKLQYAVSKETLQMMRAKEICLEQKKHALKEEMQSLQGGTEAIARLDQLESDYYDLQLQLYEVQFEILKCEELLLTAQLESIKRLISEKRDEVVYYDTYESMEAMLEKEEMAASVHAQREELQKLQQKARQLEARRGRVSAKKAYLRNKKEICIAKHHEKFQQRFQSEDEYRAHHTIQIKRDKLHDEEERKSAWVSQERQRTLDRLRTFKQRYPGQVILKSTRLRVAHSRRKSTASPVPCEEQCHSLPTVLQGQEKTEVGGGGSQLGPSQTAEPQSLVQLEDTSSEQLESTSLPPRAVVSSELPPPQSAPLLTSIDPKPCSVTIDPLPPPLPPTPPPPPPPPPPPPPPLPVAKDNGASTTAETLEKDALRTEGNERSIPKSASAPAAHLFDSSQLVSARKKLRKTVEGLQRRRVSSPMDEVLASLKRGSFHLKKVEQRTLPPFPDEDDSNNILAQIRKGVKLKKVQKEVLRESFTLLPDTDPLTRSIHEALRRIKEASPESEDEEEALPCTDWEN.

The tract at residues 1–119 (MSFALEETLE…RSARSLKGDP (119 aa)) is interaction with p300/EP300. Positions 50–61 (TAQRQRSGSREQ) are enriched in polar residues. The disordered stretch occupies residues 50-167 (TAQRQRSGSR…PVPPAPPVPP (118 aa)). Residues 77–94 (AARGRSEAAASATAALRS) show a composition bias toward low complexity. Phosphoserine is present on residues serine 108 and serine 114. The segment covering 158–167 (PVPPAPPVPP) has biased composition (pro residues). 3 coiled-coil regions span residues 315–351 (SELR…ELLD), 480–528 (LQMM…QLQL), and 571–612 (EAML…AKKA). The interaction with p300/EP300 stretch occupies residues 469–558 (EKLQYAVSKE…SIKRLISEKR (90 aa)). A Phosphoserine modification is found at serine 704. A disordered region spans residues 723–855 (EKTEVGGGGS…IPKSASAPAA (133 aa)). Over residues 734 to 761 (LGPSQTAEPQSLVQLEDTSSEQLESTSL) the composition is skewed to polar residues. The span at 794–818 (PLPPPLPPTPPPPPPPPPPPPPPLP) shows a compositional bias: pro residues. Residues 831–846 (TLEKDALRTEGNERSI) are compositionally biased toward basic and acidic residues. Serine 883 is subject to Phosphoserine. Residues 916-933 (DSNNILAQIRKGVKLKKV) form the WH2 domain. A disordered region spans residues 962-983 (IKEASPESEDEEEALPCTDWEN). Residues 967–983 (PESEDEEEALPCTDWEN) show a composition bias toward acidic residues. Serine 969 is subject to Phosphoserine.

The protein belongs to the JMY family. As to quaternary structure, interacts with p300/EP300, the complex activates p53/TP53 transcriptional activity. Interacts with TTC5/STRAP; the interaction takes place in the nucleus and facilitates the association between JMY and p300/EP300. Interacts with TTC5/STRAP; the interaction takes place in the cytoplasm and results in the inhibition of JYM's nucleation activity. Interacts with MAP1LC3B; the interaction results in the activation of JYM's nucleation activity in the cytoplasm. Post-translationally, ubiquitinated by MDM2, leading to its subsequent degradation by the proteasome. In case of DNA damage, the interaction with MDM2 is altered, preventing degradation and allowing interaction with p300/EP300 and its function in p53/TP53 stress response. Widely expressed, except in testis where it is expressed at low level.

The protein localises to the nucleus. Its subcellular location is the cytoplasmic vesicle. It localises to the cytoplasm. The protein resides in the cytoskeleton. It is found in the endomembrane system. The protein localises to the autophagosome membrane. In terms of biological role, acts both as a nuclear p53/TP53-cofactor and a cytoplasmic regulator of actin dynamics depending on conditions. In nucleus, acts as a cofactor that increases p53/TP53 response via its interaction with p300/EP300. Increases p53/TP53-dependent transcription and apoptosis, suggesting an important role in p53/TP53 stress response such as DNA damage. In cytoplasm, acts as a nucleation-promoting factor for both branched and unbranched actin filaments. Activates the Arp2/3 complex to induce branched actin filament networks. Also catalyzes actin polymerization in the absence of Arp2/3, creating unbranched filaments. Contributes to cell motility by controlling actin dynamics. May promote the rapid formation of a branched actin network by first nucleating new mother filaments and then activating Arp2/3 to branch off these filaments. Upon nutrient stress, directly recruited by MAP1LC3B to the phagophore membrane surfaces to promote actin assembly during autophagy. The p53/TP53-cofactor and actin activator activities are regulated via its subcellular location. In Mus musculus (Mouse), this protein is Junction-mediating and -regulatory protein (Jmy).